The following is a 33-amino-acid chain: U1-pseudomyrmecitoxin-Pt1 subunit LS2 (33 aa).

It belongs to the myrmexin family. Heterodimer composed of subunit LS2 and subunit SS1, heterodimer composed of subunit LS2 and SS2, and heterodimer composed of subunit LS2 and SS3; disulfide-linked. Expressed by the venom gland.

It localises to the secreted. In terms of biological role, this heterodimer may have anti-inflammatory properties, since the myrmexin complex (composed of 6 SS-LS heterodimers) inhibits carrageenin-induced edema in a dose-dependent manner (after subcutaneous injection into rats). This chain is U1-pseudomyrmecitoxin-Pt1 subunit LS2, found in Pseudomyrmex triplarinus (Ant).